A 257-amino-acid chain; its full sequence is MSGYPKSYNPFDDDVEDEDTRPAPWKDARDLPDGPDPPIDRQQYLRQEVLRGPSATAASTSRSLFLMYESEKIGVASSEELVRQRGVLEHTEKMVDKMDQDLKMSQKHINSIKSVFGGFINYFKSKPVEPPPEQNGSIVPQPSSRLKEAINTSKDQESKYQASHPNLRRLHDAELDSVPASTVNTEVYPKNSSLRAYHQKIDSNLDELSVGLGRLKDIALGMQTEIEEQDDILDRLTTKVDKLDVNIKSTEKKVRQL.

Positions 1–42 are disordered; that stretch reads MSGYPKSYNPFDDDVEDEDTRPAPWKDARDLPDGPDPPIDRQ. Residues 20–32 are compositionally biased toward basic and acidic residues; the sequence is TRPAPWKDARDLP. Residues S77, S78, S114, S163, S181, S203, and S209 each carry the phosphoserine modification. The t-SNARE coiled-coil homology domain maps to 195-257; it reads RAYHQKIDSN…KSTEKKVRQL (63 aa).

It belongs to the SNAP-25 family. In terms of assembly, forms a SNARE complex, composed of VAMP8, SNAP29 and STX17, involved in fusion of autophagosome with lysosome. Interacts with multiple syntaxins including STX6. Interacts with EIPR1. Interacts with STX17; this interaction is increased in the absence of TMEM39A. As to expression, widely expressed.

It is found in the cytoplasm. It localises to the golgi apparatus membrane. The protein localises to the cytoplasmic vesicle. The protein resides in the autophagosome membrane. Its subcellular location is the cell projection. It is found in the cilium membrane. Its function is as follows. SNAREs, soluble N-ethylmaleimide-sensitive factor-attachment protein receptors, are essential proteins for fusion of cellular membranes. SNAREs localized on opposing membranes assemble to form a trans-SNARE complex, an extended, parallel four alpha-helical bundle that drives membrane fusion. SNAP29 is a SNARE involved in autophagy through the direct control of autophagosome membrane fusion with the lysososome membrane. Also plays a role in ciliogenesis by regulating membrane fusions. This chain is Synaptosomal-associated protein 29, found in Rattus norvegicus (Rat).